The following is a 116-amino-acid chain: M-zodatoxin-Lt6a/b (116 aa).

A signal peptide spans 1–22 (MKYFVVALTLAVAFVCIEECKT). 2 consecutive propeptides follow at residues 23–44 (VEIG…EEAR) and 80–83 (EEAR). 2 short sequence motifs (processing quadruplet motif) span residues 41–44 (EEAR) and 80–83 (EEAR). Gln-84 carries the post-translational modification Pyrrolidone carboxylic acid.

Belongs to the cationic peptide 03 (latarcin) family. 06 subfamily. Cleavage of the propeptide depends on the processing quadruplet motif (XXXR, with at least one of X being E). Expressed by the venom gland.

It localises to the secreted. In terms of biological role, does not have antimicrobial activity against neither Gram-positive bacteria (A.globiformis VKM Ac-1112 (MIC&gt;70 uM), and B.subtilis VKM B-501 (MIC&gt;70 uM)), nor Gram-negative bacteria (E.coli DH5-alpha (MIC&gt;70 uM), E.coli MH1 (MIC&gt;70 uM), and P.aeruginosa PAO1 (MIC&gt;70 uM)), nor yeasts (P.pastoris GS115 (MIC&gt;70 uM), and S.cerevisiae Y190 (MIC&gt;70 uM)). Does not have hemolytic activity against rabbit erythrocytes. However, it causes some conductance changes in planar bilayer membranes, without membrane rupture, suggesting a cytolytic function on other biological targets. It causes paralysis, but is not lethal when injected into insect (M.domestica) larvae. The sequence is that of M-zodatoxin-Lt6a/b from Lachesana tarabaevi (Spider).